The sequence spans 1402 residues: Transcription elongation factor spt-6 (1402 aa).

The tract at residues Met-1–Thr-199 is disordered. Acidic residues-rich tracts occupy residues Asp-10–Ala-28, Asp-40–Glu-52, Ile-62–Asp-75, and Glu-90–Leu-102. Residues His-123–Leu-135 are compositionally biased toward basic and acidic residues. The span at Asp-161–Glu-176 shows a compositional bias: acidic residues. A compositionally biased stretch (basic and acidic residues) spans Glu-177 to Thr-199. One can recognise an S1 motif domain in the interval Gly-1094 to Arg-1161. Residues Pro-1209–Asp-1306 enclose the SH2 domain.

It belongs to the SPT6 family.

The protein localises to the nucleus. Its subcellular location is the chromosome. In terms of biological role, histone H3-H4 chaperone that plays a role in maintenance of chromatin structure during RNA polymerase II transcription elongation thereby repressing transcription initiation from cryptic promoters. Mediates the reassembly of nucleosomes onto the promoters of at least a selected set of genes during repression; the nucleosome reassembly is essential for transcriptional repression. Essential for viability. The sequence is that of Transcription elongation factor spt-6 (spt-6) from Neurospora crassa (strain ATCC 24698 / 74-OR23-1A / CBS 708.71 / DSM 1257 / FGSC 987).